We begin with the raw amino-acid sequence, 660 residues long: Threonine--tRNA ligase (660 aa).

In terms of domain architecture, TGS spans 1–49 (MPINEIRVQKGQRYRDAINDKKVIAVKKGDKFLDLDEIAGEDEAVQPVY). The interval 225–554 (DHRKIIAEMD…LLEHFAGKLP (330 aa)) is catalytic. Zn(2+) contacts are provided by cysteine 318, histidine 369, and histidine 531.

Belongs to the class-II aminoacyl-tRNA synthetase family. As to quaternary structure, homodimer. Zn(2+) is required as a cofactor.

It is found in the cytoplasm. The enzyme catalyses tRNA(Thr) + L-threonine + ATP = L-threonyl-tRNA(Thr) + AMP + diphosphate + H(+). Functionally, catalyzes the attachment of threonine to tRNA(Thr) in a two-step reaction: L-threonine is first activated by ATP to form Thr-AMP and then transferred to the acceptor end of tRNA(Thr). The polypeptide is Threonine--tRNA ligase (Thermoplasma volcanium (strain ATCC 51530 / DSM 4299 / JCM 9571 / NBRC 15438 / GSS1)).